We begin with the raw amino-acid sequence, 144 residues long: Large ribosomal subunit protein uL13 (144 aa).

This sequence belongs to the universal ribosomal protein uL13 family. In terms of assembly, part of the 50S ribosomal subunit.

In terms of biological role, this protein is one of the early assembly proteins of the 50S ribosomal subunit, although it is not seen to bind rRNA by itself. It is important during the early stages of 50S assembly. This Mycoplasmopsis agalactiae (strain NCTC 10123 / CIP 59.7 / PG2) (Mycoplasma agalactiae) protein is Large ribosomal subunit protein uL13.